The following is a 460-amino-acid chain: ATP synthase subunit beta (460 aa).

150-157 (GGAGVGKT) contributes to the ATP binding site.

This sequence belongs to the ATPase alpha/beta chains family. In terms of assembly, F-type ATPases have 2 components, CF(1) - the catalytic core - and CF(0) - the membrane proton channel. CF(1) has five subunits: alpha(3), beta(3), gamma(1), delta(1), epsilon(1). CF(0) has three main subunits: a(1), b(2) and c(9-12). The alpha and beta chains form an alternating ring which encloses part of the gamma chain. CF(1) is attached to CF(0) by a central stalk formed by the gamma and epsilon chains, while a peripheral stalk is formed by the delta and b chains.

Its subcellular location is the cell inner membrane. It carries out the reaction ATP + H2O + 4 H(+)(in) = ADP + phosphate + 5 H(+)(out). Functionally, produces ATP from ADP in the presence of a proton gradient across the membrane. The catalytic sites are hosted primarily by the beta subunits. The protein is ATP synthase subunit beta of Edwardsiella ictaluri (strain 93-146).